We begin with the raw amino-acid sequence, 328 residues long: Fructosamine deglycase FrlB (328 aa).

2 consecutive SIS domains span residues 15 to 153 (FLQD…VLEN) and 181 to 311 (NAKQ…ELAE).

In terms of assembly, homooctamer.

Functionally, catalyzes the conversion of a range of fructosamine 6-phosphates to glucose 6-phosphate and a free amino acid. This is Fructosamine deglycase FrlB (frlB) from Bacillus subtilis (strain 168).